Reading from the N-terminus, the 929-residue chain is SED5-binding protein 3 (929 aa).

The residue at position 15 (Ser15) is a Phosphoserine. Positions 18–28 (ESTVHTGGASS) are enriched in polar residues. Residues 18–52 (ESTVHTGGASSKKSRRPHRAYHNFSSGTVPTLGNS) are disordered. The span at 29–38 (KKSRRPHRAY) shows a compositional bias: basic residues. Residues 40-52 (NFSSGTVPTLGNS) are compositionally biased toward polar residues. At Thr72 the chain carries Phosphothreonine. 5 positions are modified to phosphoserine: Ser83, Ser85, Ser94, Ser101, and Ser110. At Thr216 the chain carries Phosphothreonine. The tract at residues 220–244 (CRRCRAYANPKFQFTYDSSVICNIC) is zinc finger-like.

The protein belongs to the SEC23/SEC24 family. SEC24 subfamily. In terms of assembly, COPII is composed of at least five proteins: the SEC23/24 complex, the SEC13/31 complex and SAR1. Binds to SED5. Interacts with GHR1.

The protein resides in the cytoplasm. It localises to the golgi apparatus membrane. Its subcellular location is the endoplasmic reticulum membrane. Its function is as follows. Component of the COPII coat, that covers ER-derived vesicles involved in transport from the endoplasmic reticulum to the Golgi apparatus. COPII acts in the cytoplasm to promote the transport of secretory, plasma membrane, and vacuolar proteins from the endoplasmic reticulum to the Golgi complex. In Saccharomyces cerevisiae (strain ATCC 204508 / S288c) (Baker's yeast), this protein is SED5-binding protein 3 (SFB3).